The chain runs to 338 residues: Protein SGT1 homolog (338 aa).

Residue Ala-2 is modified to N-acetylalanine. TPR repeat units lie at residues 11–45 (AASR…KPDD), 46–79 (APYY…NPNS), and 80–113 (STAL…NSAD). The 90-residue stretch at 142 to 231 (QSKIKYDWYQ…PEAVRWEKLE (90 aa)) folds into the CS domain. Positions 249–338 (LYPSSSHYTR…PPDDMEWKKY (90 aa)) constitute an SGS domain. Residue Ser-254 is modified to Phosphoserine. Phosphothreonine is present on Thr-257. Lys-268 is covalently cross-linked (Glycyl lysine isopeptide (Lys-Gly) (interchain with G-Cter in SUMO1); alternate). Lys-268 participates in a covalent cross-link: Glycyl lysine isopeptide (Lys-Gly) (interchain with G-Cter in SUMO2); alternate. At Ser-304 the chain carries Phosphoserine.

The protein belongs to the SGT1 family. In terms of assembly, probably associates with SCF (SKP1-CUL1-F-box protein) complex through interaction with SKP1. Interacts with S100A6. Interacts with HSP90. Post-translationally, phosphorylated at Ser-254 and Ser-304, dephosphorylation promotes nuclear translocation, most likely due to disruption of the SUGT1-HSP90 complex.

It is found in the cytoplasm. It localises to the nucleus. May play a role in ubiquitination and subsequent proteasomal degradation of target proteins. This chain is Protein SGT1 homolog, found in Bos taurus (Bovine).